The primary structure comprises 142 residues: Large ribosomal subunit protein bL21 (142 aa).

A compositionally biased stretch (basic residues) spans 74 to 84 (RRRQNSKRTRG). Residues 74-142 (RRRQNSKRTR…KAAAKAESAE (69 aa)) form a disordered region. A compositionally biased stretch (basic and acidic residues) spans 107-125 (KAAEKKAPKADAAEGEAAK). Residues 126–135 (PKKAAPKKAA) are compositionally biased toward basic residues.

This sequence belongs to the bacterial ribosomal protein bL21 family. Part of the 50S ribosomal subunit. Contacts protein L20.

Functionally, this protein binds to 23S rRNA in the presence of protein L20. This chain is Large ribosomal subunit protein bL21, found in Brucella melitensis biotype 2 (strain ATCC 23457).